We begin with the raw amino-acid sequence, 479 residues long: Adenosylhomocysteinase (479 aa).

Thr66, Asp142, and Glu203 together coordinate substrate. 204 to 206 (TTT) is an NAD(+) binding site. Residues Lys233 and Asp237 each contribute to the substrate site. NAD(+) contacts are provided by residues Asn238, 267-272 (GYGDVG), Glu290, Asn325, 346-348 (IGH), and Asn394.

The protein belongs to the adenosylhomocysteinase family. Requires NAD(+) as cofactor.

Its subcellular location is the cytoplasm. The enzyme catalyses S-adenosyl-L-homocysteine + H2O = L-homocysteine + adenosine. The protein operates within amino-acid biosynthesis; L-homocysteine biosynthesis; L-homocysteine from S-adenosyl-L-homocysteine: step 1/1. Functionally, may play a key role in the regulation of the intracellular concentration of adenosylhomocysteine. The chain is Adenosylhomocysteinase from Oleidesulfovibrio alaskensis (strain ATCC BAA-1058 / DSM 17464 / G20) (Desulfovibrio alaskensis).